Reading from the N-terminus, the 350-residue chain is MSKNKLSKGQQRRVNANHQRRLKTSKEKPDYDDNLFGEPDEGIVISRFGMHADVESADGDVHRCNIRRTIRSLVTGDRVVWRPGKLAAEGVNVKGIVEAVHERTSVLTRPDFYDGVKPIAANIDQIVIVSAILPELSLNIIDRYLVACETLQIEPIIVLNKIDLLDDEGMAFVNEQMDIYRNIGYRVLMVSSHTQDGLKPLEEALTGRISIFAGQSGVGKSSLLNALLGLQKEILTNDVSDNSGLGQHTTTAARLYHFPHGGDVIDSPGVREFGLWHLEPEQITQGFVEFHDYLGLCKYRDCKHDTDPGCAIREAVDEGKIAETRFENYHRILESMAQVKTRKNFSDTDD.

Positions 1–17 (MSKNKLSKGQQRRVNAN) are enriched in polar residues. The disordered stretch occupies residues 1–33 (MSKNKLSKGQQRRVNANHQRRLKTSKEKPDYDD). Residues 104 to 273 (TSVLTRPDFY…VIDSPGVREF (170 aa)) form the CP-type G domain. GTP is bound by residues 160-163 (NKID) and 214-222 (GQSGVGKSS). Zn(2+) is bound by residues Cys297, Cys302, His304, and Cys310.

Belongs to the TRAFAC class YlqF/YawG GTPase family. RsgA subfamily. As to quaternary structure, monomer. Associates with 30S ribosomal subunit, binds 16S rRNA. It depends on Zn(2+) as a cofactor.

The protein localises to the cytoplasm. One of several proteins that assist in the late maturation steps of the functional core of the 30S ribosomal subunit. Helps release RbfA from mature subunits. May play a role in the assembly of ribosomal proteins into the subunit. Circularly permuted GTPase that catalyzes slow GTP hydrolysis, GTPase activity is stimulated by the 30S ribosomal subunit. The polypeptide is Small ribosomal subunit biogenesis GTPase RsgA (Escherichia fergusonii (strain ATCC 35469 / DSM 13698 / CCUG 18766 / IAM 14443 / JCM 21226 / LMG 7866 / NBRC 102419 / NCTC 12128 / CDC 0568-73)).